Here is a 741-residue protein sequence, read N- to C-terminus: MLKYEFLHGLQKRSHYLRQLSGQFFSRSYSSKIRNIGILAHIDAGKTTTTERMLFYAGKTRTLGEVHRGNTVTDYLTQERERGITICSSAVTFAWNGHRINLLDTPGHIDFTMEVEQSLYAVDGVVVVLDGTAGVEAQTVTVWTQADKHKLPRLIFVNKMDRPDADFEKCIADLKEKLEAHPVCLQYPVKNEDGVLAINDVITLERLTWQQKDLGQKYIRMKLEPSDELRDLQEKRNELIDRLSGVDDELADVVISTESFDKVDNHLIERALRRATGQLKVVPVLLGSAYKNVGIQRLMDAVNSYLPAPEERNQIYDCFGSEVAGKVFKIVHDKQRGALTLVRILRGEIKKGMRLISARGQAEVVSKLYEPLADEYREVNAVQSGDVVICAGLKSTVTGDLLTSSQSTLKNAQKRLKQSLGTTESVIPELDDESEESEDMFGLDPQIPDAVYFCSIEPPSISSQTAMEQALRQLQREDPSLRVSYDSVTGQTVLGGMGELHMDIIKSRILSEYKIDVDLGPLQIAYKETIESPALTTLSVEKEIAGAKQNVSITLELVKDKSEIFSLDKSPENMPNLNTLRPRILQVLKKGAIGALERGPRVGGQVVDTQIRLHNATIGRGTADSFVMATAAQCVQKVLSTSGTRLLEPIMSLQIVAPSERISGIMADLSRRRAQINDVLPKGERNKMILVNAPLAELSGYSSALRTISSGTASMTMQPCGFSAMNSVDESQAERRAQGLE.

Residues 1–29 (MLKYEFLHGLQKRSHYLRQLSGQFFSRSY) constitute a mitochondrion transit peptide. Positions 31–310 (SKIRNIGILA…AVNSYLPAPE (280 aa)) constitute a tr-type G domain. Residues 40–47 (AHIDAGKT), 104–108 (DTPGH), and 158–161 (NKMD) contribute to the GTP site.

It belongs to the TRAFAC class translation factor GTPase superfamily. Classic translation factor GTPase family. EF-G/EF-2 subfamily.

It localises to the mitochondrion. Functionally, mitochondrial GTPase that mediates the disassembly of ribosomes from messenger RNA at the termination of mitochondrial protein biosynthesis. Not involved in the GTP-dependent ribosomal translocation step during translation elongation. The protein is Ribosome-releasing factor 2, mitochondrial of Drosophila ananassae (Fruit fly).